Here is a 62-residue protein sequence, read N- to C-terminus: Large ribosomal subunit protein bL28 (62 aa).

This sequence belongs to the bacterial ribosomal protein bL28 family.

The chain is Large ribosomal subunit protein bL28 from Streptococcus uberis (strain ATCC BAA-854 / 0140J).